The chain runs to 212 residues: Probable dual specificity protein phosphatase DDB_G0269404 (212 aa).

Positions 30–169 (FDAQEVIPNL…LINYEATILK (140 aa)) constitute a Tyrosine-protein phosphatase domain. The active-site Phosphocysteine intermediate is Cys-113.

This sequence belongs to the protein-tyrosine phosphatase family. Non-receptor class dual specificity subfamily.

It catalyses the reaction O-phospho-L-tyrosyl-[protein] + H2O = L-tyrosyl-[protein] + phosphate. The enzyme catalyses O-phospho-L-seryl-[protein] + H2O = L-seryl-[protein] + phosphate. It carries out the reaction O-phospho-L-threonyl-[protein] + H2O = L-threonyl-[protein] + phosphate. Its function is as follows. Has a dual specificity toward Ser/Thr and Tyr-containing proteins. The protein is Probable dual specificity protein phosphatase DDB_G0269404 of Dictyostelium discoideum (Social amoeba).